The chain runs to 292 residues: Elongation factor Ts (292 aa).

Residues 80-83 are involved in Mg(2+) ion dislocation from EF-Tu; sequence TDFV.

It belongs to the EF-Ts family.

The protein resides in the cytoplasm. Associates with the EF-Tu.GDP complex and induces the exchange of GDP to GTP. It remains bound to the aminoacyl-tRNA.EF-Tu.GTP complex up to the GTP hydrolysis stage on the ribosome. This is Elongation factor Ts from Tolumonas auensis (strain DSM 9187 / NBRC 110442 / TA 4).